The primary structure comprises 100 residues: Aspartyl/glutamyl-tRNA(Asn/Gln) amidotransferase subunit C (100 aa).

It belongs to the GatC family. In terms of assembly, heterotrimer of A, B and C subunits.

It carries out the reaction L-glutamyl-tRNA(Gln) + L-glutamine + ATP + H2O = L-glutaminyl-tRNA(Gln) + L-glutamate + ADP + phosphate + H(+). The enzyme catalyses L-aspartyl-tRNA(Asn) + L-glutamine + ATP + H2O = L-asparaginyl-tRNA(Asn) + L-glutamate + ADP + phosphate + 2 H(+). Functionally, allows the formation of correctly charged Asn-tRNA(Asn) or Gln-tRNA(Gln) through the transamidation of misacylated Asp-tRNA(Asn) or Glu-tRNA(Gln) in organisms which lack either or both of asparaginyl-tRNA or glutaminyl-tRNA synthetases. The reaction takes place in the presence of glutamine and ATP through an activated phospho-Asp-tRNA(Asn) or phospho-Glu-tRNA(Gln). The protein is Aspartyl/glutamyl-tRNA(Asn/Gln) amidotransferase subunit C of Streptococcus pneumoniae (strain Hungary19A-6).